The primary structure comprises 308 residues: Probable D,D-dipeptide transport ATP-binding protein DdpF (308 aa).

Residues Leu-8–Leu-243 enclose the ABC transporter domain. Gly-49–Ser-56 lines the ATP pocket.

This sequence belongs to the ABC transporter superfamily. As to quaternary structure, the complex is composed of two ATP-binding proteins (DdpD and DdpF), two transmembrane proteins (DdpB and DdpC) and a solute-binding protein (DdpA).

It localises to the cell inner membrane. In terms of biological role, part of the ABC transporter complex DdpABCDF, which is probably involved in D,D-dipeptide transport. Probably responsible for energy coupling to the transport system. The protein is Probable D,D-dipeptide transport ATP-binding protein DdpF of Escherichia coli (strain K12).